Here is a 637-residue protein sequence, read N- to C-terminus: Protein arginine N-methyltransferase 5 (637 aa).

An N-acetylalanine modification is found at Ala2. The segment at 13–292 is TIM barrel; that stretch reads RVSSGRDLNC…YLEYLSQNRP (280 aa). Residues 308 to 615 form the SAM-dependent MTase PRMT-type domain; it reads LQSPLQPLMD…SNSKKVWYEW (308 aa). Tyr324 contacts S-adenosyl-L-methionine. Position 327 (Phe327) interacts with a protein. Residues 333–334, Glu392, and 419–420 contribute to the S-adenosyl-L-methionine site; these read KY and DM. Positions 435 and 444 each coordinate a protein. Residues Glu435 and Glu444 each act as proton donor/acceptor in the active site. The segment at 465-637 is beta barrel; that stretch reads PGEYTSFLAP…PTGRSYTIGL (173 aa). The dimerization stretch occupies residues 488–494; that stretch reads REKDRDP.

This sequence belongs to the class I-like SAM-binding methyltransferase superfamily. Protein arginine N-methyltransferase family. In terms of assembly, forms, at least, homodimers and homotetramers. Component of the methylosome complex, composed of PRMT5, WDR77 and CLNS1A. Found in a complex composed of PRMT5, WDR77 and RIOK1. RIOK1 and CLNS1A associate with PRMT5 in a mutually exclusive fashion, which allows the recruitment of distinct methylation substrates, such as nucleolin/NCL and Sm proteins, respectively. Interacts with PRDM1. Identified in a complex composed of methylosome and PRMT1 and ERH. Interacts with EGFR; methylates EGFR and stimulates EGFR-mediated ERK activation. Interacts with HOXA9. Interacts with SRGAP2. Found in a complex with COPRS, RUNX1 and CBFB. Interacts with CHTOP; the interaction symmetrically methylates CHTOP, but seems to require the presence of PRMT1. Interacts with EPB41L3; this modulates methylation of target proteins. Component of a high molecular weight E2F-pocket protein complex, CERC (cyclin E1 repressor complex). Associates with SWI/SNF remodeling complexes containing SMARCA2 and SMARCA4. Interacts with JAK2, SSTR1, SUPT5H, BRAF and with active RAF1. Interacts with LSM11, PRMT7 and SNRPD3. Interacts with COPRS; promoting its recruitment on histone H4. Interacts with CLNS1A/pICln. Identified in a complex with CLNS1A/pICln and Sm proteins. Interacts with RPS10. Interacts with WDR77. Interacts with IWS1. Interacts with CRY1. Interacts with POLR2A. Interacts with SMN1/SMN2. Interacts with LYAR; this interaction is direct. Interacts with TTC5/STRAP; this interaction is DNA damage-dependent and promotes PRMT5 interaction with p53/TP53. Interacts with p53/TP53 in response to DNA damage; the interaction is TTC5/STRAP dependent. Interacts with FAM47E; the interaction is direct, promotes PRMT5 localization to chromatin, and does not disrupt its association with WDR77 or STUB1. Interacts with TDRD6. Interacts with STUB1. Interacts with MBD2. Does not interact with MBD3.

The protein resides in the cytoplasm. The protein localises to the nucleus. It is found in the golgi apparatus. The enzyme catalyses L-arginyl-[protein] + 2 S-adenosyl-L-methionine = N(omega),N(omega)'-dimethyl-L-arginyl-[protein] + 2 S-adenosyl-L-homocysteine + 2 H(+). Activity is increased by EGF, HGF, FGF1 or FGF2 treatments, and slightly decreased by NGF treatment. Arginine methyltransferase that can both catalyze the formation of omega-N monomethylarginine (MMA) and symmetrical dimethylarginine (sDMA), with a preference for the formation of MMA. Specifically mediates the symmetrical dimethylation of arginine residues in the small nuclear ribonucleoproteins Sm D1 (SNRPD1) and Sm D3 (SNRPD3); such methylation being required for the assembly and biogenesis of snRNP core particles. Methylates SUPT5H and may regulate its transcriptional elongation properties. May methylate the N-terminal region of MBD2. Mono- and dimethylates arginine residues of myelin basic protein (MBP) in vitro. May play a role in cytokine-activated transduction pathways. Negatively regulates cyclin E1 promoter activity and cellular proliferation. Methylates histone H2A and H4 'Arg-3' during germ cell development. Methylates histone H3 'Arg-8', which may repress transcription. Methylates the Piwi proteins (PIWIL1, PIWIL2 and PIWIL4), methylation of Piwi proteins being required for the interaction with Tudor domain-containing proteins and subsequent localization to the meiotic nuage. Methylates RPS10. Attenuates EGF signaling through the MAPK1/MAPK3 pathway acting at 2 levels. First, monomethylates EGFR; this enhances EGFR 'Tyr-1197' phosphorylation and PTPN6 recruitment, eventually leading to reduced SOS1 phosphorylation. Second, methylates RAF1 and probably BRAF, hence destabilizing these 2 signaling proteins and reducing their catalytic activity. Required for induction of E-selectin and VCAM-1, on the endothelial cells surface at sites of inflammation. Methylates HOXA9. Methylates and regulates SRGAP2 which is involved in cell migration and differentiation. Acts as a transcriptional corepressor in CRY1-mediated repression of the core circadian component PER1 by regulating the H4R3 dimethylation at the PER1 promoter. Methylates GM130/GOLGA2, regulating Golgi ribbon formation. Methylates H4R3 in genes involved in glioblastomagenesis in a CHTOP- and/or TET1-dependent manner. Symmetrically methylates POLR2A, a modification that allows the recruitment to POLR2A of proteins including SMN1/SMN2 and SETX. This is required for resolving RNA-DNA hybrids created by RNA polymerase II, that form R-loop in transcription terminal regions, an important step in proper transcription termination. Along with LYAR, binds the promoter of gamma-globin HBG1/HBG2 and represses its expression. Symmetrically methylates NCL. Methylates p53/TP53; methylation might possibly affect p53/TP53 target gene specificity. Involved in spliceosome maturation and mRNA splicing in prophase I spermatocytes through the catalysis of the symmetrical arginine dimethylation of SNRPB (small nuclear ribonucleoprotein-associated protein) and the interaction with tudor domain-containing protein TDRD6. This chain is Protein arginine N-methyltransferase 5 (PRMT5), found in Macaca fascicularis (Crab-eating macaque).